A 361-amino-acid chain; its full sequence is Phospho-N-acetylmuramoyl-pentapeptide-transferase (361 aa).

10 consecutive transmembrane segments (helical) span residues 25 to 45, 73 to 93, 98 to 118, 139 to 159, 168 to 188, 200 to 220, 237 to 257, 264 to 284, 290 to 310, and 339 to 359; these read RGIL…PAVI, TMGG…WGDL, VWLV…DDWI, IFGL…AAIT, IALP…IVGF, GLAI…AYAS, AGEL…FLWF, VFMG…IAVI, VLVI…IQVV, and VIVR…ATLK.

This sequence belongs to the glycosyltransferase 4 family. MraY subfamily. Mg(2+) serves as cofactor.

It localises to the cell inner membrane. The enzyme catalyses UDP-N-acetyl-alpha-D-muramoyl-L-alanyl-gamma-D-glutamyl-meso-2,6-diaminopimeloyl-D-alanyl-D-alanine + di-trans,octa-cis-undecaprenyl phosphate = di-trans,octa-cis-undecaprenyl diphospho-N-acetyl-alpha-D-muramoyl-L-alanyl-D-glutamyl-meso-2,6-diaminopimeloyl-D-alanyl-D-alanine + UMP. It participates in cell wall biogenesis; peptidoglycan biosynthesis. Functionally, catalyzes the initial step of the lipid cycle reactions in the biosynthesis of the cell wall peptidoglycan: transfers peptidoglycan precursor phospho-MurNAc-pentapeptide from UDP-MurNAc-pentapeptide onto the lipid carrier undecaprenyl phosphate, yielding undecaprenyl-pyrophosphoryl-MurNAc-pentapeptide, known as lipid I. This chain is Phospho-N-acetylmuramoyl-pentapeptide-transferase, found in Xanthomonas euvesicatoria pv. vesicatoria (strain 85-10) (Xanthomonas campestris pv. vesicatoria).